A 624-amino-acid polypeptide reads, in one-letter code: DNA mismatch repair protein MutL (624 aa).

The interval 416 to 436 (LTPSVDQPDTGDGENPVAPEK) is disordered.

It belongs to the DNA mismatch repair MutL/HexB family.

This protein is involved in the repair of mismatches in DNA. It is required for dam-dependent methyl-directed DNA mismatch repair. May act as a 'molecular matchmaker', a protein that promotes the formation of a stable complex between two or more DNA-binding proteins in an ATP-dependent manner without itself being part of a final effector complex. This chain is DNA mismatch repair protein MutL, found in Chlorobaculum tepidum (strain ATCC 49652 / DSM 12025 / NBRC 103806 / TLS) (Chlorobium tepidum).